The following is a 315-amino-acid chain: Melanoma-associated antigen 9 (315 aa).

Positions 1 to 13 (MSLEQRSPHCKPD) are enriched in basic and acidic residues. The tract at residues 1-67 (MSLEQRSPHC…PQSPQGGASS (67 aa)) is disordered. Over residues 50 to 67 (SAAGSSSPPQSPQGGASS) the composition is skewed to low complexity. One can recognise an MAGE domain in the interval 108-307 (LKLKVAELVH…ICYPSLYEEV (200 aa)).

As to expression, expressed in many tumors of several types, such as melanoma, head and neck squamous cell carcinoma, lung carcinoma and breast carcinoma, but not in normal tissues except for testes and placenta.

Not known, though may play a role in embryonal development and tumor transformation or aspects of tumor progression. In Homo sapiens (Human), this protein is Melanoma-associated antigen 9 (MAGEA9).